The sequence spans 32 residues: VRDAYIAKPENCVYHCAGNEGCNNLCTCNGAT.

An LCN-type CS-alpha/beta domain is found at 2 to 32; sequence RDAYIAKPENCVYHCAGNEGCNNLCTCNGAT.

As to expression, expressed by the venom gland.

The protein resides in the secreted. Its function is as follows. Alpha toxins bind voltage-independently at site-3 of sodium channels (Nav) and inhibit the inactivation of the activated channels, thereby blocking neuronal transmission. This toxin dose-dependently delays inactivation of voltage-gated sodium channels (Nav) (EC(50)=0.91 uM), and shifts the steady-state activation and inactivation to hyperpolarized direction. In addition, it dose-dependently alters calcium dynamics and increases phosphorylation of MAP kinases 1/3 (MAPK1/MAPK3) and cAMP-response element binding (CREB) proteins in neocortical neurons. This effect is eliminated by tetrodotoxin, a Nav blocker. In Olivierus martensii (Manchurian scorpion), this protein is Sodium channel neurotoxin BmK NT2.